A 188-amino-acid chain; its full sequence is Protein SYC1 (188 aa).

Component of the cleavage and polyadenylation factor (CPF) complex, which is composed of at least PTI1, SYC1, SSU72, GLC7, MPE1, REF2, PFS2, PTA1, YSH1/BRR5, SWD2, CFT2/YDH1, YTH1, CFT1/YHH1, FIP1 and PAP1. Component of the APT complex, which is a subcomplex of CPF, and is composed of PTI1, SYC1, SSU72, GLC7, REF2, PTA1 and SWD2.

It localises to the nucleus. Its function is as follows. Component of the cleavage and polyadenylation factor (CPF) complex, which plays a key role in polyadenylation-dependent pre-mRNA 3'-end formation and cooperates with cleavage factors including the CFIA complex and NAB4/CFIB. Component of the APT complex, which may be involved in polyadenylation-independent transcript 3'-end formation, including snoRNAs and snRNAs. The chain is Protein SYC1 (SYC1) from Saccharomyces cerevisiae (strain ATCC 204508 / S288c) (Baker's yeast).